Consider the following 294-residue polypeptide: Putative HTH-type transcriptional regulatory protein STK_12680 (294 aa).

In terms of domain architecture, HTH cro/C1-type spans 123–175 (LKKKREEMGLSLGEVAQALGVSRISIYDYEREDSYVSIDIAEKLVELFGDDIL). The H-T-H motif DNA-binding region spans 134–153 (LGEVAQALGVSRISIYDYER).

The polypeptide is Putative HTH-type transcriptional regulatory protein STK_12680 (Sulfurisphaera tokodaii (strain DSM 16993 / JCM 10545 / NBRC 100140 / 7) (Sulfolobus tokodaii)).